Here is a 500-residue protein sequence, read N- to C-terminus: Glycerol kinase (500 aa).

Residue T14 participates in ADP binding. ATP contacts are provided by T14, T15, and S16. A sn-glycerol 3-phosphate-binding site is contributed by T14. R18 provides a ligand contact to ADP. Sn-glycerol 3-phosphate is bound by residues R84, E85, and Y136. Glycerol is bound by residues R84, E85, and Y136. A Phosphohistidine; by HPr modification is found at H232. D246 provides a ligand contact to sn-glycerol 3-phosphate. Residues D246 and Q247 each contribute to the glycerol site. Positions 268 and 311 each coordinate ADP. Positions 268, 311, 315, and 412 each coordinate ATP. ADP contacts are provided by G412 and N416.

This sequence belongs to the FGGY kinase family. As to quaternary structure, homotetramer and homodimer (in equilibrium). The phosphoenolpyruvate-dependent sugar phosphotransferase system (PTS), including enzyme I, and histidine-containing protein (HPr) are required for the phosphorylation, which leads to the activation of the enzyme.

It carries out the reaction glycerol + ATP = sn-glycerol 3-phosphate + ADP + H(+). The protein operates within polyol metabolism; glycerol degradation via glycerol kinase pathway; sn-glycerol 3-phosphate from glycerol: step 1/1. Activated by phosphorylation and inhibited by fructose 1,6-bisphosphate (FBP). Its function is as follows. Key enzyme in the regulation of glycerol uptake and metabolism. Catalyzes the phosphorylation of glycerol to yield sn-glycerol 3-phosphate. The protein is Glycerol kinase of Limosilactobacillus reuteri (strain DSM 20016) (Lactobacillus reuteri).